A 430-amino-acid polypeptide reads, in one-letter code: MATRLLRGSLRLWGGLCAPRLPTASRCSHSGGEERLESPSAKKLTDIGIRRIFSSEHDIFRESVRKFFQEEVIPHHAEWEKAGEVSRELWEKAGKQGLLGINIAERHGGIGGDLYSAAIVWEEQAYSNCTGPGFSLHSDIVMPYIANYGSEEQIKHFIPQMTAGKCIGAIAMTEPGAGSDLQGVRTNAKKDGSDWILNGSKVFITNGWLSDVVIVVAVTNREARSPAHGISLFLVENGMKGFVKGRKLHKIGLKAQDTAELFFEDVRLPASALLGEENKGFYYLMQELPQERLLIAELAVSASEFMFEETRNYVKQRKAFGKTVAHIQTVQHKLAELKTHICVTRAFVDSCLQLHETKRLESAAASMAKYWASELQNSVAYDCVQLHGGWGYMWEYPIARAYVDARVQPIYGGTNEIMKELIAREIVHDK.

Residues 1–30 (MATRLLRGSLRLWGGLCAPRLPTASRCSHS) constitute a mitochondrion transit peptide. The residue at position 42 (lysine 42) is an N6-acetyllysine. Serine 54 and serine 55 each carry phosphoserine. N6-acetyllysine; alternate is present on residues lysine 66 and lysine 81. An N6-succinyllysine; alternate mark is found at lysine 66 and lysine 81. Residues lysine 92 and lysine 95 each carry the N6-acetyllysine modification. Lysine 165 carries the N6-succinyllysine modification. FAD contacts are provided by residues 170-179 (IAMTEPGAGS) and 203-205 (FIT). Serine 179 contributes to the substrate binding site. 227–228 (AH) lines the substrate pocket. Position 240 is an N6-succinyllysine (lysine 240). Lysine 254 and lysine 279 each carry N6-acetyllysine; alternate. Residues lysine 254 and lysine 279 each carry the N6-succinyllysine; alternate modification. Residues tyrosine 282 and 289-292 (PQER) contribute to the substrate site. The active-site Proton acceptor is glutamate 291. An FAD-binding site is contributed by arginine 317. Lysine 318 carries the post-translational modification N6-acetyllysine. An N6-acetyllysine; alternate modification is found at lysine 322. Lysine 322 bears the N6-succinyllysine; alternate mark. Glutamine 328 provides a ligand contact to FAD. Lysine 358 carries the N6-acetyllysine modification. Residue serine 362 is modified to Phosphoserine. Position 385 to 389 (385 to 389 (QLHGG)) interacts with FAD. 412-413 (GG) lines the substrate pocket. 414-416 (TNE) provides a ligand contact to FAD.

The protein belongs to the acyl-CoA dehydrogenase family. As to quaternary structure, homotetramer. FAD is required as a cofactor. Post-translationally, acetylation at Lys-318 and Lys-322 in proximity of the cofactor-binding sites strongly reduces catalytic activity. These sites are deacetylated by SIRT3.

It is found in the mitochondrion matrix. It carries out the reaction a long-chain 2,3-saturated fatty acyl-CoA + oxidized [electron-transfer flavoprotein] + H(+) = a long-chain (2E)-enoyl-CoA + reduced [electron-transfer flavoprotein]. The enzyme catalyses hexanoyl-CoA + oxidized [electron-transfer flavoprotein] + H(+) = (2E)-hexenoyl-CoA + reduced [electron-transfer flavoprotein]. The catalysed reaction is octanoyl-CoA + oxidized [electron-transfer flavoprotein] + H(+) = (2E)-octenoyl-CoA + reduced [electron-transfer flavoprotein]. It catalyses the reaction decanoyl-CoA + oxidized [electron-transfer flavoprotein] + H(+) = (2E)-decenoyl-CoA + reduced [electron-transfer flavoprotein]. It carries out the reaction dodecanoyl-CoA + oxidized [electron-transfer flavoprotein] + H(+) = (2E)-dodecenoyl-CoA + reduced [electron-transfer flavoprotein]. The enzyme catalyses tetradecanoyl-CoA + oxidized [electron-transfer flavoprotein] + H(+) = (2E)-tetradecenoyl-CoA + reduced [electron-transfer flavoprotein]. The catalysed reaction is oxidized [electron-transfer flavoprotein] + hexadecanoyl-CoA + H(+) = (2E)-hexadecenoyl-CoA + reduced [electron-transfer flavoprotein]. It catalyses the reaction octadecanoyl-CoA + oxidized [electron-transfer flavoprotein] + H(+) = (2E)-octadecenoyl-CoA + reduced [electron-transfer flavoprotein]. It carries out the reaction eicosanoyl-CoA + oxidized [electron-transfer flavoprotein] + H(+) = (2E)-eicosenoyl-CoA + reduced [electron-transfer flavoprotein]. The enzyme catalyses docosanoyl-CoA + oxidized [electron-transfer flavoprotein] + H(+) = (2E)-docosenoyl-CoA + reduced [electron-transfer flavoprotein]. The catalysed reaction is tetracosanoyl-CoA + oxidized [electron-transfer flavoprotein] + H(+) = (2E)-tetracosenoyl-CoA + reduced [electron-transfer flavoprotein]. It catalyses the reaction (5E)-tetradecenoyl-CoA + oxidized [electron-transfer flavoprotein] + H(+) = (2E,5E)-tetradecadienoyl-CoA + reduced [electron-transfer flavoprotein]. It carries out the reaction (5Z)-tetradecenoyl-CoA + oxidized [electron-transfer flavoprotein] + H(+) = (2E,5Z)-tetradecadienoyl-CoA + reduced [electron-transfer flavoprotein]. The enzyme catalyses oxidized [electron-transfer flavoprotein] + (9Z)-octadecenoyl-CoA + H(+) = (2E,9Z)-octadecadienoyl-CoA + reduced [electron-transfer flavoprotein]. It participates in lipid metabolism; mitochondrial fatty acid beta-oxidation. Functionally, long-chain specific acyl-CoA dehydrogenase is one of the acyl-CoA dehydrogenases that catalyze the first step of mitochondrial fatty acid beta-oxidation, an aerobic process breaking down fatty acids into acetyl-CoA and allowing the production of energy from fats. The first step of fatty acid beta-oxidation consists in the removal of one hydrogen from C-2 and C-3 of the straight-chain fatty acyl-CoA thioester, resulting in the formation of trans-2-enoyl-CoA. Among the different mitochondrial acyl-CoA dehydrogenases, long-chain specific acyl-CoA dehydrogenase can act on saturated and unsaturated acyl-CoAs with 6 to 24 carbons with a preference for 8 to 18 carbons long primary chains. The protein is Long-chain specific acyl-CoA dehydrogenase, mitochondrial of Sus scrofa (Pig).